A 164-amino-acid polypeptide reads, in one-letter code: Protein-export protein SecB (164 aa).

This sequence belongs to the SecB family. In terms of assembly, homotetramer, a dimer of dimers. One homotetramer interacts with 1 SecA dimer.

Its subcellular location is the cytoplasm. Functionally, one of the proteins required for the normal export of preproteins out of the cell cytoplasm. It is a molecular chaperone that binds to a subset of precursor proteins, maintaining them in a translocation-competent state. It also specifically binds to its receptor SecA. This is Protein-export protein SecB from Burkholderia orbicola (strain MC0-3).